A 407-amino-acid chain; its full sequence is Peptidase T (407 aa).

His81 contributes to the Zn(2+) binding site. Residue Asp83 is part of the active site. Position 142 (Asp142) interacts with Zn(2+). Glu176 serves as the catalytic Proton acceptor. Zn(2+) is bound by residues Glu177, Asp199, and His381.

The protein belongs to the peptidase M20B family. The cofactor is Zn(2+).

It localises to the cytoplasm. The enzyme catalyses Release of the N-terminal residue from a tripeptide.. Cleaves the N-terminal amino acid of tripeptides. The sequence is that of Peptidase T from Streptococcus pneumoniae (strain Taiwan19F-14).